A 252-amino-acid polypeptide reads, in one-letter code: MDALQTQTVNSTTAPQPNYIPGLIAVVGCDGTGKSTLTTDLVKSLQQHWQTERRYLGLLSGEDGDKIKRLPLVGVWLERRLAAKSSKTQSMKTKSPALWAAVIMYCFSLRRMANLRKVQRLAQSGVLVVSDRFPQAEISGFYYDGPGIGVERATGKISMFLAQRERRLYQQMAQYRPELIIRLGIDIETAISRKPDHDYAELQDKIGVMSKIGYNGTKILEIDSRAPYSEVLEQAQKAVSLVAIVSDRRSLT.

Residue 28–35 participates in ATP binding; it reads GCDGTGKS.

It to E.coli YghS and YghT.

This is an uncharacterized protein from Escherichia coli O6:H1 (strain CFT073 / ATCC 700928 / UPEC).